Reading from the N-terminus, the 184-residue chain is MATGPRYTVPMRRRREARTNYHQRLRLLKSGKPRLVARKSNNQTKAQLVVTGPQGDETVASATSADLEAFGWEAPTGNLPAAYLTGLLAGKRAIEAGLDEAVLDIGLNTATPGNKVFAVQEGVIDAGLEVPHNEDVFADWQRTRGAHIAEYAEQLEDGLYSGDFDATELPDHFDEVRERVEDEL.

Belongs to the universal ribosomal protein uL18 family. In terms of assembly, part of the 50S ribosomal subunit. Contacts the 5S and 23S rRNAs.

Functionally, this is one of the proteins that bind and probably mediate the attachment of the 5S RNA into the large ribosomal subunit, where it forms part of the central protuberance. This is Large ribosomal subunit protein uL18 from Natronomonas pharaonis (strain ATCC 35678 / DSM 2160 / CIP 103997 / JCM 8858 / NBRC 14720 / NCIMB 2260 / Gabara) (Halobacterium pharaonis).